Consider the following 214-residue polypeptide: Outer-membrane lipoprotein LolB (214 aa).

A signal peptide spans 1–25; that stretch reads MNNLKRFTKSIFSCIALSGLLFLGG. Residue C26 is the site of N-palmitoyl cysteine attachment. The S-diacylglycerol cysteine moiety is linked to residue C26.

Belongs to the LolB family. Monomer.

The protein localises to the cell outer membrane. Functionally, plays a critical role in the incorporation of lipoproteins in the outer membrane after they are released by the LolA protein. The protein is Outer-membrane lipoprotein LolB of Shewanella oneidensis (strain ATCC 700550 / JCM 31522 / CIP 106686 / LMG 19005 / NCIMB 14063 / MR-1).